The sequence spans 493 residues: Zinc finger CCCH domain-containing protein 34 (493 aa).

3 consecutive C3H1-type zinc fingers follow at residues 14-43 (RRCN…HADG), 45-71 (RFNR…HPPL), and 91-118 (VKAA…HEPL). Residues 397–477 (MGECPQPANH…SFSDDFEGPK (81 aa)) form a disordered region. Basic residues predominate over residues 409 to 420 (FRGRRKKNRGKQ). Over residues 452–468 (SNSSFSHSTACTPNVRS) the composition is skewed to polar residues.

The sequence is that of Zinc finger CCCH domain-containing protein 34 from Oryza sativa subsp. japonica (Rice).